Consider the following 358-residue polypeptide: Protein IncC (358 aa).

The segment at 1-101 (MGAIHEETAN…VGSRRQEETG (101 aa)) is disordered. A compositionally biased stretch (basic and acidic residues) spans 88-99 (HRQEVGSRRQEE).

It belongs to the ParA family.

Functionally, this is one of the proteins encoded by the trfB operon; it is involved in plasmid maintenance and replication. The polypeptide is Protein IncC (incC) (Escherichia coli).